A 528-amino-acid chain; its full sequence is MFFQTGLLLSLSLWTKVAYAAFGITTSSSSYVIDAGSANPLKFTVSRSSCDITSINYSGTELQYASKGSHISSGLGRATVSATQDGDYIKVTCATSTLTHYMVVHHGDSTIHMATHITAEPSIGELRFIARLKSDVLPNEEPFGDVSTTAGGTAIEGSDVFLVNGKTRSKFYSSQRFIDDQRHCISGSAHRVCMILNQYESSSGGPFHRDIDANNGGGFNALYWYMNSGHVQTEPYRMGLHGPYSMVFSRSGMPGTNIDTSFFANLNIKGYVPASGRGTVTGKASGADSRMKWVVHWHNTAAQYWTYTASDGSFTSPAMKPGTYTMVYYQGEYKVAETSVTVRAGSKITKNISGSVKTGKTIFKIGEWDGQPTGFRNADKQLRMHPSDSRMAAWGPLTYTVGRSAPSDFPMAVFKSVNNPVTIKFTASAAQTAAATLRIGTTLSFAGGRPQAKINSYTAAAPPAPKNLDSRGVTRGAYRGLGEVYDVAIPAGTIVAGVNTITISVVSGNSGEKFLSPNFVFDCVELFQ.

The N-terminal stretch at 1–20 (MFFQTGLLLSLSLWTKVAYA) is a signal peptide. 2 cysteine pairs are disulfide-bonded: cysteine 50/cysteine 93 and cysteine 184/cysteine 193. Asparagine 56 is a glycosylation site (N-linked (GlcNAc...) asparagine). An N-linked (GlcNAc...) asparagine glycan is attached at asparagine 351.

The protein belongs to the polysaccharide lyase 4 family.

It is found in the secreted. It carries out the reaction Endotype eliminative cleavage of L-alpha-rhamnopyranosyl-(1-&gt;4)-alpha-D-galactopyranosyluronic acid bonds of rhamnogalacturonan I domains in ramified hairy regions of pectin leaving L-rhamnopyranose at the reducing end and 4-deoxy-4,5-unsaturated D-galactopyranosyluronic acid at the non-reducing end.. Its function is as follows. Pectinolytic enzymes consist of four classes of enzymes: pectin lyase, polygalacturonase, pectin methylesterase and rhamnogalacturonase. Degrades the rhamnogalacturonan I (RG-I) backbone of pectin. Active against linseed rhamnogalacturonan. The polypeptide is Probable rhamnogalacturonate lyase A (rglA) (Aspergillus clavatus (strain ATCC 1007 / CBS 513.65 / DSM 816 / NCTC 3887 / NRRL 1 / QM 1276 / 107)).